The chain runs to 388 residues: Na(+)/H(+) antiporter NhaA (388 aa).

A run of 11 helical transmembrane segments spans residues 14-34 (GGII…SGFT), 59-79 (MLLW…GLEV), 95-115 (AFPV…YLAF), 125-145 (GWAI…ALLG), 154-174 (IFLM…IALF), 179-199 (LSMV…VLNL), 219-239 (VLKS…FIPL), 254-274 (VLHP…NAGV), 287-307 (ILPL…ISLF), 328-348 (IMAV…IASL), and 356-376 (ALIN…AVIG).

This sequence belongs to the NhaA Na(+)/H(+) (TC 2.A.33) antiporter family.

The protein resides in the cell inner membrane. The enzyme catalyses Na(+)(in) + 2 H(+)(out) = Na(+)(out) + 2 H(+)(in). Functionally, na(+)/H(+) antiporter that extrudes sodium in exchange for external protons. The polypeptide is Na(+)/H(+) antiporter NhaA (Citrobacter koseri (strain ATCC BAA-895 / CDC 4225-83 / SGSC4696)).